We begin with the raw amino-acid sequence, 163 residues long: Cyanate hydratase (163 aa).

Active-site residues include Arg103, Glu106, and Ser129.

This sequence belongs to the cyanase family.

The catalysed reaction is cyanate + hydrogencarbonate + 3 H(+) = NH4(+) + 2 CO2. Functionally, catalyzes the reaction of cyanate with bicarbonate to produce ammonia and carbon dioxide. The polypeptide is Cyanate hydratase (Ajellomyces capsulatus (strain H143) (Darling's disease fungus)).